The following is a 374-amino-acid chain: Lipoyl synthase, mitochondrial (374 aa).

Residues 1 to 19 (MHSRSALLYRFLRPASRCF) constitute a mitochondrion transit peptide. 7 residues coordinate [4Fe-4S] cluster: Cys103, Cys108, Cys114, Cys134, Cys138, Cys141, and Ser350. The region spanning 119–339 (ETGTATATIM…RLLGMEMGFR (221 aa)) is the Radical SAM core domain.

The protein belongs to the radical SAM superfamily. Lipoyl synthase family. The cofactor is [4Fe-4S] cluster. Expressed in leaves and flowers, but not in roots. Expressed in roots, rosette leaves, cauline leaves, stems, flowers and siliques.

It localises to the mitochondrion. It carries out the reaction [[Fe-S] cluster scaffold protein carrying a second [4Fe-4S](2+) cluster] + N(6)-octanoyl-L-lysyl-[protein] + 2 oxidized [2Fe-2S]-[ferredoxin] + 2 S-adenosyl-L-methionine + 4 H(+) = [[Fe-S] cluster scaffold protein] + N(6)-[(R)-dihydrolipoyl]-L-lysyl-[protein] + 4 Fe(3+) + 2 hydrogen sulfide + 2 5'-deoxyadenosine + 2 L-methionine + 2 reduced [2Fe-2S]-[ferredoxin]. It participates in protein modification; protein lipoylation via endogenous pathway; protein N(6)-(lipoyl)lysine from octanoyl-[acyl-carrier-protein]: step 2/2. Its function is as follows. Catalyzes the radical-mediated insertion of two sulfur atoms into the C-6 and C-8 positions of the octanoyl moiety bound to the lipoyl domains of lipoate-dependent enzymes, thereby converting the octanoylated domains into lipoylated derivatives. Together with LIP2 is essential for mitochondrial protein lipoylation during seed development. Required for the lipoylation of mitochondrial pyruvate dehydrogenase component E2 proteins in leaves and roots. The chain is Lipoyl synthase, mitochondrial from Arabidopsis thaliana (Mouse-ear cress).